Reading from the N-terminus, the 420-residue chain is L-rhamnose isomerase (420 aa).

Mn(2+) is bound by residues His264, Asp296, and Asp298.

This sequence belongs to the rhamnose isomerase family. The cofactor is Mn(2+).

It is found in the cytoplasm. It carries out the reaction L-rhamnopyranose = L-rhamnulose. It functions in the pathway carbohydrate degradation; L-rhamnose degradation; glycerone phosphate from L-rhamnose: step 1/3. Catalyzes the interconversion of L-rhamnose and L-rhamnulose. This is L-rhamnose isomerase from Listeria monocytogenes serotype 4b (strain F2365).